Here is a 543-residue protein sequence, read N- to C-terminus: Chaperonin GroEL (543 aa).

ATP is bound by residues 29–32 (TLGP), 86–90 (DGTTT), glycine 413, 478–480 (DAL), and aspartate 494. The tract at residues 524–543 (PEPEAPAVPAGMPGGMGGMY) is disordered.

It belongs to the chaperonin (HSP60) family. Forms a cylinder of 14 subunits composed of two heptameric rings stacked back-to-back. Interacts with the co-chaperonin GroES.

It is found in the cytoplasm. The catalysed reaction is ATP + H2O + a folded polypeptide = ADP + phosphate + an unfolded polypeptide.. Its function is as follows. Together with its co-chaperonin GroES, plays an essential role in assisting protein folding. The GroEL-GroES system forms a nano-cage that allows encapsulation of the non-native substrate proteins and provides a physical environment optimized to promote and accelerate protein folding. This Ruminiclostridium cellulolyticum (strain ATCC 35319 / DSM 5812 / JCM 6584 / H10) (Clostridium cellulolyticum) protein is Chaperonin GroEL.